The sequence spans 579 residues: Probable zinc metalloprotease EGY1, chloroplastic (579 aa).

2 disordered regions span residues 1–42 and 78–146; these read MAAA…PASA and GGGG…NEPP. The transit peptide at 1–44 directs the protein to the chloroplast; sequence MAAAAAALASSPMVHLTASRLRLPRPARSPAAATPSPSPASAAC. Low complexity predominate over residues 16 to 42; the sequence is LTASRLRLPRPARSPAAATPSPSPASA. Positions 78-92 are enriched in gly residues; sequence GGGGGGGGGGGGTGG. 2 stretches are compositionally biased toward low complexity: residues 104–115 and 125–137; these read AAAAEAKVGGAV and SGSF…SSSG. Helical transmembrane passes span 272–292, 321–341, 357–377, 392–412, 419–439, 452–472, 505–525, and 547–567; these read YVIS…LGIA, LLPF…IQLF, LSIP…ITQF, MAGP…GLLL, ASDL…LGLV, ATVA…TTAF, LLGL…YVLI, and AALI…WDEL.

Belongs to the peptidase M50B family.

It is found in the plastid. It localises to the chloroplast membrane. Its function is as follows. Probable membrane-associated metalloprotease that may be involved in chloroplast development. This is Probable zinc metalloprotease EGY1, chloroplastic (EGY1) from Oryza sativa subsp. japonica (Rice).